The following is a 180-amino-acid chain: Cytokinin-beta-glucosidase 4 (180 aa).

Its function is as follows. Hydrolyzes cytokinin glucosides thus liberating free cytokinins. The polypeptide is Cytokinin-beta-glucosidase 4 (ROLC4) (Panax ginseng (Korean ginseng)).